The sequence spans 328 residues: Phosphate acyltransferase (328 aa).

Belongs to the PlsX family. As to quaternary structure, homodimer. Probably interacts with PlsY.

Its subcellular location is the cytoplasm. It catalyses the reaction a fatty acyl-[ACP] + phosphate = an acyl phosphate + holo-[ACP]. It participates in lipid metabolism; phospholipid metabolism. Its function is as follows. Catalyzes the reversible formation of acyl-phosphate (acyl-PO(4)) from acyl-[acyl-carrier-protein] (acyl-ACP). This enzyme utilizes acyl-ACP as fatty acyl donor, but not acyl-CoA. This Staphylococcus saprophyticus subsp. saprophyticus (strain ATCC 15305 / DSM 20229 / NCIMB 8711 / NCTC 7292 / S-41) protein is Phosphate acyltransferase.